The chain runs to 369 residues: tRNA 2-selenouridine synthase (369 aa).

The 125-residue stretch at 12-136 (FLDDIPLMDV…LRNFLFETTR (125 aa)) folds into the Rhodanese domain. Cys95 functions as the S-selanylcysteine intermediate in the catalytic mechanism.

This sequence belongs to the SelU family. In terms of assembly, monomer.

The enzyme catalyses 5-methylaminomethyl-2-thiouridine(34) in tRNA + selenophosphate + (2E)-geranyl diphosphate + H2O + H(+) = 5-methylaminomethyl-2-selenouridine(34) in tRNA + (2E)-thiogeraniol + phosphate + diphosphate. It catalyses the reaction 5-methylaminomethyl-2-thiouridine(34) in tRNA + (2E)-geranyl diphosphate = 5-methylaminomethyl-S-(2E)-geranyl-thiouridine(34) in tRNA + diphosphate. The catalysed reaction is 5-methylaminomethyl-S-(2E)-geranyl-thiouridine(34) in tRNA + selenophosphate + H(+) = 5-methylaminomethyl-2-(Se-phospho)selenouridine(34) in tRNA + (2E)-thiogeraniol. It carries out the reaction 5-methylaminomethyl-2-(Se-phospho)selenouridine(34) in tRNA + H2O = 5-methylaminomethyl-2-selenouridine(34) in tRNA + phosphate. Its function is as follows. Involved in the post-transcriptional modification of the uridine at the wobble position (U34) of tRNA(Lys), tRNA(Glu) and tRNA(Gln). Catalyzes the conversion of 2-thiouridine (S2U-RNA) to 2-selenouridine (Se2U-RNA). Acts in a two-step process involving geranylation of 2-thiouridine (S2U) to S-geranyl-2-thiouridine (geS2U) and subsequent selenation of the latter derivative to 2-selenouridine (Se2U) in the tRNA chain. This is tRNA 2-selenouridine synthase from Pseudomonas aeruginosa (strain ATCC 15692 / DSM 22644 / CIP 104116 / JCM 14847 / LMG 12228 / 1C / PRS 101 / PAO1).